A 581-amino-acid chain; its full sequence is MRTSLLFYRTSKNANKEASVLSYELLQKAGYLFKTSKGIYSYTPLFQRVILKMTEIIREELNAIGGQEVCLPLLQPAELWEKTGRWKAFLSEKLLYVLKDRENKAMCLAPTHEEVVSEFVAQWLTGREQLPIHLYQIGTKFRDEIRPRFGLMRAKEFLMEDSYTFSDSPEQMEEQYAKLRLAYQRIFDRLNLKYVIVAADGGKIGKGKSEEFHVLCSLGEDTICVSGSYGANVEAAQAIPPSYVYDSNLLPVEEVATPNIRTIEDLEVFFNTPKHKILKTLVVKTRQKDSEKFFAICIRGDRQINLTKVASFLQVDDCELASEEEILKHLHVEKGFIGPLYCPIPCYADETTRPMTNFICANNQKDVHCKHMNWGRDIPLPAFGDFLLAEAGDLCPQNGGAPYEIFQGVEVAHIFNLGTRYTESFSVGFQDKNGDKQLCWMGTYGIGVGRTLAACIEQLADNKGLVWPLAVTPFSITILYNGGDTEGEATALQLYQSLNTEGFEPLLDDRNERLGFKLKDSDLLGIPYKLIIGKSFQSTGLLEIESRSGEKCNVSPENLLDWCSKNLPCHTRKIPPLQEQN.

It belongs to the class-II aminoacyl-tRNA synthetase family. ProS type 1 subfamily. Homodimer.

The protein localises to the cytoplasm. The catalysed reaction is tRNA(Pro) + L-proline + ATP = L-prolyl-tRNA(Pro) + AMP + diphosphate. Catalyzes the attachment of proline to tRNA(Pro) in a two-step reaction: proline is first activated by ATP to form Pro-AMP and then transferred to the acceptor end of tRNA(Pro). As ProRS can inadvertently accommodate and process non-cognate amino acids such as alanine and cysteine, to avoid such errors it has two additional distinct editing activities against alanine. One activity is designated as 'pretransfer' editing and involves the tRNA(Pro)-independent hydrolysis of activated Ala-AMP. The other activity is designated 'posttransfer' editing and involves deacylation of mischarged Ala-tRNA(Pro). The misacylated Cys-tRNA(Pro) is not edited by ProRS. The chain is Proline--tRNA ligase from Chlamydia trachomatis serovar A (strain ATCC VR-571B / DSM 19440 / HAR-13).